The chain runs to 319 residues: CCAAT/enhancer-binding protein homolog 1 (319 aa).

The tract at residues 53–67 (SLTIAASLQQRDRER) is n' domain; required for axon regeneration. Residues 163 to 319 (TRRAVKRPVP…QRHILENFNK (157 aa)) are disordered. Positions 171-181 (VPYDDYQKEYS) are enriched in basic and acidic residues. Residues 182-198 (EESSDMTDNDGSVDDSY) show a composition bias toward acidic residues. 4 stretches are compositionally biased toward basic and acidic residues: residues 225 to 248 (LKADEEKAEPTYKLKRARNNDAVR), 255 to 274 (KELQDKKEAEHDKMKRRIAE), 281 to 291 (SERDARRRDQD), and 302 to 319 (PMKEQRMPQRHILENFNK). The 76-residue stretch at 233-308 (EPTYKLKRAR…NKGPMKEQRM (76 aa)) folds into the bZIP domain. Residues 237 to 271 (KLKRARNNDAVRKSRKKAKELQDKKEAEHDKMKRR) are basic motif. The interval 275–308 (LEGLLQSERDARRRDQDTLEQLLRNKGPMKEQRM) is leucine-zipper.

The protein belongs to the bZIP family. C/EBP subfamily. As to quaternary structure, may interact with transcription factor ets-4. May interact (via N-terminus) with nipi-3. May interact (via N-terminus) with importin subunit alpha ima-3. Expressed in touch and motor neurons.

The protein resides in the synapse. It is found in the cytoplasm. It localises to the nucleus. The protein localises to the cell projection. Its subcellular location is the axon. Transcription factor. Binds to promoter regions of target genes, perhaps at the motif 5'-[AGCT]TT[AGT][TC]GAAA[ACT]-3'. Modulates expression of genes involved in development and in stress responses, including those regulating the p38/MAPK signaling pathways such as MAPKK sek-1 and phosphatase vhp-1. Involved in innate immunity. Plays a role in repressing the response to infection by the Gram-negative bacterium P.aeruginosa, perhaps acting independently of the pmk-1 or pmk-3 p38/MAPK pathways. However, also plays a protective role in the response to infection by P.aeruginosa. Required in axonal regrowth following injury and synaptogenesis. Following axon injury, in concert with transcription factor ets-4, activates expression of receptor tyrosine kinase svh-2. May function downstream of the Ca2+-activated p38/MAPK pathway to promote axon regeneration. Plays a role in modulating polymerization of neuronal microtubules. Involved in modulating lipid homeostasis. In Caenorhabditis elegans, this protein is CCAAT/enhancer-binding protein homolog 1.